We begin with the raw amino-acid sequence, 193 residues long: Putative manganese efflux pump MntP (193 aa).

A run of 6 helical transmembrane segments spans residues 3 to 23 (MYATLILALALSMDAFAASIC), 41 to 61 (LIFGLAEACTPLIGWSLGLYA), 65 to 85 (IIEWDHWVAFTLLFILGCRMI), 106 to 126 (IVLITTAIATSLDAMAIGIGL), 133 to 153 (IVHTAMAIGMMTMIMATLGML), and 169 to 189 (IGGLILIAIGFNILFEHLELF).

Belongs to the MntP (TC 9.B.29) family.

Its subcellular location is the cell inner membrane. Probably functions as a manganese efflux pump. This chain is Putative manganese efflux pump MntP, found in Photorhabdus laumondii subsp. laumondii (strain DSM 15139 / CIP 105565 / TT01) (Photorhabdus luminescens subsp. laumondii).